The sequence spans 449 residues: Trigger factor (449 aa).

The 88-residue stretch at 174 to 261 (GDIAVVGFKG…LKDLKTRELP (88 aa)) folds into the PPIase FKBP-type domain. The segment at 430-449 (ENSTVTEKAPDKDKPSVTDA) is disordered. Residues 437–449 (KAPDKDKPSVTDA) show a composition bias toward basic and acidic residues.

It belongs to the FKBP-type PPIase family. Tig subfamily.

The protein localises to the cytoplasm. The catalysed reaction is [protein]-peptidylproline (omega=180) = [protein]-peptidylproline (omega=0). In terms of biological role, involved in protein export. Acts as a chaperone by maintaining the newly synthesized protein in an open conformation. Functions as a peptidyl-prolyl cis-trans isomerase. This chain is Trigger factor, found in Synechococcus sp. (strain CC9311).